The chain runs to 311 residues: Ribonuclease Z (311 aa).

Zn(2+)-binding residues include His61, His63, Asp65, His66, His139, Asp210, and His268. Asp65 acts as the Proton acceptor in catalysis.

This sequence belongs to the RNase Z family. In terms of assembly, homodimer. It depends on Zn(2+) as a cofactor.

The enzyme catalyses Endonucleolytic cleavage of RNA, removing extra 3' nucleotides from tRNA precursor, generating 3' termini of tRNAs. A 3'-hydroxy group is left at the tRNA terminus and a 5'-phosphoryl group is left at the trailer molecule.. Its function is as follows. Zinc phosphodiesterase, which displays some tRNA 3'-processing endonuclease activity. Probably involved in tRNA maturation, by removing a 3'-trailer from precursor tRNA. The polypeptide is Ribonuclease Z (Haloarcula marismortui (strain ATCC 43049 / DSM 3752 / JCM 8966 / VKM B-1809) (Halobacterium marismortui)).